The chain runs to 268 residues: Tryptophan synthase alpha chain (268 aa).

Active-site proton acceptor residues include Glu49 and Asp60.

This sequence belongs to the TrpA family. In terms of assembly, tetramer of two alpha and two beta chains.

It carries out the reaction (1S,2R)-1-C-(indol-3-yl)glycerol 3-phosphate + L-serine = D-glyceraldehyde 3-phosphate + L-tryptophan + H2O. The protein operates within amino-acid biosynthesis; L-tryptophan biosynthesis; L-tryptophan from chorismate: step 5/5. In terms of biological role, the alpha subunit is responsible for the aldol cleavage of indoleglycerol phosphate to indole and glyceraldehyde 3-phosphate. This is Tryptophan synthase alpha chain from Vibrio cholerae serotype O1 (strain ATCC 39541 / Classical Ogawa 395 / O395).